A 423-amino-acid polypeptide reads, in one-letter code: Amino sugar nitrososynthase RubN8 (423 aa).

It belongs to the acyl-CoA dehydrogenase family. The cofactor is FAD.

It participates in antibiotic biosynthesis. Its function is as follows. Nitrososynthase involved in the biosynthesis of rubradirin, an ansamycin antibiotic. In vitro, catalyzes the double-oxidation of TDP-L-epi-vancosamine to TDP-L-epi-vancosonitrose. In vivo, probably catalyzes the formation of D-rubranitrose, the nitro sugar moiety of rubradirin. This Streptomyces rubradiris (Streptomyces achromogenes subsp. rubradiris) protein is Amino sugar nitrososynthase RubN8.